A 69-amino-acid polypeptide reads, in one-letter code: MSVLTPLLLRGLTGSARRLPVPRAKIHSLPPEEKLGIMELAVGLTSCFVTFLLPAGWILSHLETYRRPE.

The transit peptide at 1–25 (MSVLTPLLLRGLTGSARRLPVPRAK) directs the protein to the mitochondrion. Residues 2–19 (SVLTPLLLRGLTGSARRL) carry the SIFI-degron motif. Residues 26 to 36 (IHSLPPEEKLG) are Mitochondrial matrix-facing. Residues 37–60 (IMELAVGLTSCFVTFLLPAGWILS) traverse the membrane as a helical segment. The Mitochondrial intermembrane segment spans residues 61–69 (HLETYRRPE).

The protein belongs to the cytochrome c oxidase VIII family. As to quaternary structure, component of the cytochrome c oxidase (complex IV, CIV), a multisubunit enzyme composed of 14 subunits. The complex is composed of a catalytic core of 3 subunits MT-CO1, MT-CO2 and MT-CO3, encoded in the mitochondrial DNA, and 11 supernumerary subunits COX4I, COX5A, COX5B, COX6A, COX6B, COX6C, COX7A, COX7B, COX7C, COX8 and NDUFA4, which are encoded in the nuclear genome. The complex exists as a monomer or a dimer and forms supercomplexes (SCs) in the inner mitochondrial membrane with NADH-ubiquinone oxidoreductase (complex I, CI) and ubiquinol-cytochrome c oxidoreductase (cytochrome b-c1 complex, complex III, CIII), resulting in different assemblies (supercomplex SCI(1)III(2)IV(1) and megacomplex MCI(2)III(2)IV(2)). In response to mitochondrial stress, the precursor protein is ubiquitinated by the SIFI complex in the cytoplasm before mitochondrial import, leading to its degradation. Within the SIFI complex, UBR4 initiates ubiquitin chain that are further elongated or branched by KCMF1.

It localises to the mitochondrion inner membrane. It participates in energy metabolism; oxidative phosphorylation. Functionally, component of the cytochrome c oxidase, the last enzyme in the mitochondrial electron transport chain which drives oxidative phosphorylation. The respiratory chain contains 3 multisubunit complexes succinate dehydrogenase (complex II, CII), ubiquinol-cytochrome c oxidoreductase (cytochrome b-c1 complex, complex III, CIII) and cytochrome c oxidase (complex IV, CIV), that cooperate to transfer electrons derived from NADH and succinate to molecular oxygen, creating an electrochemical gradient over the inner membrane that drives transmembrane transport and the ATP synthase. Cytochrome c oxidase is the component of the respiratory chain that catalyzes the reduction of oxygen to water. Electrons originating from reduced cytochrome c in the intermembrane space (IMS) are transferred via the dinuclear copper A center (CU(A)) of subunit 2 and heme A of subunit 1 to the active site in subunit 1, a binuclear center (BNC) formed by heme A3 and copper B (CU(B)). The BNC reduces molecular oxygen to 2 water molecules using 4 electrons from cytochrome c in the IMS and 4 protons from the mitochondrial matrix. The chain is Cytochrome c oxidase subunit 8A, mitochondrial (COX8A) from Hylobates agilis (Agile gibbon).